A 101-amino-acid chain; its full sequence is Small ribosomal subunit protein uS14 (101 aa).

The protein belongs to the universal ribosomal protein uS14 family. Part of the 30S ribosomal subunit. Contacts proteins S3 and S10.

Functionally, binds 16S rRNA, required for the assembly of 30S particles and may also be responsible for determining the conformation of the 16S rRNA at the A site. The protein is Small ribosomal subunit protein uS14 of Polynucleobacter necessarius subsp. necessarius (strain STIR1).